The sequence spans 634 residues: Chaperone protein DnaK (634 aa).

Position 193 is a phosphothreonine; by autocatalysis (T193). The disordered stretch occupies residues G597–K634. Positions N600–N613 are enriched in low complexity. A compositionally biased stretch (basic and acidic residues) spans E616 to K634.

It belongs to the heat shock protein 70 family.

Its function is as follows. Acts as a chaperone. The chain is Chaperone protein DnaK from Ehrlichia canis (strain Jake).